Reading from the N-terminus, the 610-residue chain is Threonine--tRNA ligase (610 aa).

Residues 1-29 (MANHDQQTVSSAAATTSASPSPVVLPKTS) are disordered. A compositionally biased stretch (low complexity) spans 8–24 (TVSSAAATTSASPSPVV). The catalytic stretch occupies residues 209–502 (DHRRIGKDLD…MTENYAGDYP (294 aa)). Positions 302, 353, and 479 each coordinate Zn(2+).

The protein belongs to the class-II aminoacyl-tRNA synthetase family. As to quaternary structure, homodimer. Requires Zn(2+) as cofactor.

Its subcellular location is the cytoplasm. It catalyses the reaction tRNA(Thr) + L-threonine + ATP = L-threonyl-tRNA(Thr) + AMP + diphosphate + H(+). Catalyzes the attachment of threonine to tRNA(Thr) in a two-step reaction: L-threonine is first activated by ATP to form Thr-AMP and then transferred to the acceptor end of tRNA(Thr). Also edits incorrectly charged L-seryl-tRNA(Thr). The chain is Threonine--tRNA ligase from Synechococcus sp. (strain WH7803).